A 200-amino-acid polypeptide reads, in one-letter code: MERTEVLKPRTLADLIRVLHQLFAGEEINVEEVQAVMEAYESNPAEWAVYAKFDQYRYTRNLVDQGNGKFNLMILCWGEGHGSSIHDHTDSHCFLKMLQGNLKETLFAWPDKKSNEMIKKSERILRENQCAYINDSIGLHRVENISHTEPAVSLHLYSPPFDTCHAFDQRTGHKNKVIMTFHSKFGIKTPFTTSGSLENN.

Histidine 86, histidine 88, and histidine 140 together coordinate Fe cation. The 3'-(S-cysteinyl)-tyrosine (Cys-Tyr) cross-link spans 93–157; that stretch reads CFLKMLQGNL…TEPAVSLHLY (65 aa).

Belongs to the cysteine dioxygenase family. Monomer. Fe cation serves as cofactor. It depends on Ni(2+) as a cofactor. Zn(2+) is required as a cofactor. The thioether cross-link between Cys-93 and Tyr-157 plays a structural role through stabilizing the Fe(2+) ion, and prevents the production of highly damaging free hydroxyl radicals by holding the oxygen radical via hydroxyl hydrogen.

The enzyme catalyses L-cysteine + O2 = 3-sulfino-L-alanine + H(+). Its pathway is organosulfur biosynthesis; taurine biosynthesis; hypotaurine from L-cysteine: step 1/2. Catalyzes the oxidation of cysteine to cysteine sulfinic acid with addition of molecular dioxygen. In Bos taurus (Bovine), this protein is Cysteine dioxygenase type 1 (CDO1).